The primary structure comprises 599 residues: Aspartate--tRNA(Asp/Asn) ligase (599 aa).

Glu172 lines the L-aspartate pocket. The interval 196–199 is aspartate; that stretch reads QLFK. Arg218 provides a ligand contact to L-aspartate. ATP contacts are provided by residues 218 to 220 and Gln227; that span reads RDE. L-aspartate is bound at residue His455. ATP is bound at residue Glu489. Residue Arg496 participates in L-aspartate binding. 541–544 is a binding site for ATP; sequence GLDR.

This sequence belongs to the class-II aminoacyl-tRNA synthetase family. Type 1 subfamily. In terms of assembly, homodimer.

It localises to the cytoplasm. The enzyme catalyses tRNA(Asx) + L-aspartate + ATP = L-aspartyl-tRNA(Asx) + AMP + diphosphate. Its function is as follows. Aspartyl-tRNA synthetase with relaxed tRNA specificity since it is able to aspartylate not only its cognate tRNA(Asp) but also tRNA(Asn). Reaction proceeds in two steps: L-aspartate is first activated by ATP to form Asp-AMP and then transferred to the acceptor end of tRNA(Asp/Asn). In Herminiimonas arsenicoxydans, this protein is Aspartate--tRNA(Asp/Asn) ligase.